We begin with the raw amino-acid sequence, 309 residues long: DNA-directed RNA polymerase subunit alpha (309 aa).

The segment at 1–227 (MTFQVECVES…ALFEPLKNVS (227 aa)) is alpha N-terminal domain (alpha-NTD). Positions 237 to 309 (EPTPESQTPI…GIKLQESKVS (73 aa)) are alpha C-terminal domain (alpha-CTD).

Belongs to the RNA polymerase alpha chain family. As to quaternary structure, in cyanobacteria the RNAP catalytic core is composed of 2 alpha, 1 beta, 1 beta', 1 gamma and 1 omega subunit. When a sigma factor is associated with the core the holoenzyme is formed, which can initiate transcription.

The catalysed reaction is RNA(n) + a ribonucleoside 5'-triphosphate = RNA(n+1) + diphosphate. DNA-dependent RNA polymerase catalyzes the transcription of DNA into RNA using the four ribonucleoside triphosphates as substrates. The sequence is that of DNA-directed RNA polymerase subunit alpha from Synechococcus elongatus (strain ATCC 33912 / PCC 7942 / FACHB-805) (Anacystis nidulans R2).